A 358-amino-acid chain; its full sequence is Trace amine-associated receptor 7h (358 aa).

At methionine 1–arginine 47 the chain is on the extracellular side. An N-linked (GlcNAc...) asparagine glycan is attached at asparagine 34. 2 disulfide bridges follow: cysteine 37/cysteine 201 and cysteine 120/cysteine 205. Residues leucine 48–valine 68 traverse the membrane as a helical segment. Topologically, residues methionine 69 to asparagine 83 are cytoplasmic. The chain crosses the membrane as a helical span at residues phenylalanine 84–serine 104. At methionine 105–serine 125 the chain is on the extracellular side. A helical transmembrane segment spans residues phenylalanine 126–valine 143. At aspartate 144–lysine 166 the chain is on the cytoplasmic side. The helical transmembrane segment at cysteine 167–alanine 187 threads the bilayer. The Extracellular portion of the chain corresponds to serine 188–asparagine 217. Asparagine 210 carries an N-linked (GlcNAc...) asparagine glycan. Residues phenylalanine 218–isoleucine 238 form a helical membrane-spanning segment. Residues alanine 239–threonine 274 are Cytoplasmic-facing. The chain crosses the membrane as a helical span at residues leucine 275–isoleucine 295. Residues aspartate 296–glutamate 309 are Extracellular-facing. A helical transmembrane segment spans residues isoleucine 310 to phenylalanine 333. Over arginine 334 to glutamate 358 the chain is Cytoplasmic.

Belongs to the G-protein coupled receptor 1 family.

Its subcellular location is the cell membrane. Functionally, olfactory receptor specific for N,N-dimethylalkylamines trace amines. Trace amine compounds are enriched in animal body fluids and act on trace amine-associated receptors (TAARs) to elicit both intraspecific and interspecific innate behaviors. Ligand-binding causes a conformation change that triggers signaling via G(s)-class of G alpha proteins (GNAL or GNAS). The polypeptide is Trace amine-associated receptor 7h (Rattus norvegicus (Rat)).